A 271-amino-acid chain; its full sequence is Tetraspanin-11 (271 aa).

The Cytoplasmic segment spans residues 1-7; the sequence is MFRVSNF. A helical membrane pass occupies residues 8–28; it reads MVGLANTLVMLVGASAIGYSI. Topologically, residues 29–44 are extracellular; sequence YMFVHQGVTDCESAIR. Residues 45–65 form a helical membrane-spanning segment; the sequence is IPLLTTGLILFLVSLLGVIGS. At 66–76 the chain is on the cytoplasmic side; that stretch reads CFKENLAMVSY. Residues 77 to 97 form a helical membrane-spanning segment; the sequence is LIILFGGIVALMIFSIFLFFV. The Extracellular portion of the chain corresponds to 98-236; it reads TNKGAGRVVS…LANIREKWRN (139 aa). Residues N185 and N195 are each glycosylated (N-linked (GlcNAc...) asparagine). Residues 237 to 257 traverse the membrane as a helical segment; that stretch reads LLVFNICLLILLITVYSCGCC. At 258-271 the chain is on the cytoplasmic side; it reads ARRNNRTARKSDSV.

This sequence belongs to the tetraspanin (TM4SF) family.

The protein resides in the membrane. Its function is as follows. May be involved in the regulation of cell differentiation. The polypeptide is Tetraspanin-11 (TET11) (Arabidopsis thaliana (Mouse-ear cress)).